A 163-amino-acid polypeptide reads, in one-letter code: Nuclear cap-binding protein subunit 2 (163 aa).

MRNA contacts are provided by residues Tyr-18, Tyr-41, 110 to 114 (RVDWD), 121 to 125 (RQYGR), and 131 to 132 (QV). In terms of domain architecture, RRM spans 38 to 116 (STLYVGNLSF…RIVRVDWDAG (79 aa)).

Belongs to the RRM NCBP2 family. As to quaternary structure, component of the nuclear cap-binding complex (CBC), a heterodimer composed of Cbp80 and Cbp20 that interacts with m7GpppG-capped RNA.

Its subcellular location is the nucleus. Functionally, component of the cap-binding complex (CBC), which binds co-transcriptionally to the 5' cap of pre-mRNAs and is involved in various processes such as pre-mRNA splicing and RNA-mediated gene silencing (RNAi). The CBC complex is involved in miRNA-mediated RNA interference and is required for primary microRNAs (miRNAs) processing. Also involved in innate immunity via the short interfering RNAs (siRNAs) processing machinery by restricting the viral RNA production. In the CBC complex, Cbp20 recognizes and binds capped RNAs (m7GpppG-capped RNA) but requires Cbp80 to stabilize the movement of its N-terminal loop and lock the CBC into a high affinity cap-binding state with the cap structure. This chain is Nuclear cap-binding protein subunit 2 (Cbp20), found in Anopheles gambiae (African malaria mosquito).